The following is a 400-amino-acid chain: Putative transposase for insertion sequence element IS5376 (400 aa).

In terms of domain architecture, HTH IS21-type spans 5–67 (GEFFMIKEMY…PFKPYLQKRM (63 aa)). A DNA-binding region (H-T-H motif) is located at residues 20 to 39 (ISDIARELGIDRKTVRKYIH). Residues 35 to 55 (RKYIHSPNPPSKSKRKQRKSK) form a disordered region. Positions 113-287 (YETLPGEQMQ…SPQERWAEES (175 aa)) constitute an Integrase catalytic domain.

This sequence belongs to the transposase IS21/IS408/IS1162 family.

Involved in the transposition of the insertion sequence. The chain is Putative transposase for insertion sequence element IS5376 from Geobacillus stearothermophilus (Bacillus stearothermophilus).